The chain runs to 637 residues: MQDVVNSEKLKFDAEVGKVLKLVIHSLYTNKDIFLRELISNASDACDKLRYESLSNQDLIDGDTDFKIVISVDQDKNRLYISDNGIGMNRQDLIDNLGTIAHSGTQRFLDAINNETSSQGVVELIGKFGVGFYSAFMVASEVIVESRKAGESIGYQWRSAGDGEFIISQLEDGQFPRGTKITLILKTEESEFVDKFRIEHIVTTYSYHINYPVYFLNDAGEEEKLNSDAAIWTKSKDEISAQEHQNFFRSVAHVGGEPWMILHNKNEGVIEYTNLLYIPSIKPFDLFHPDRKCSVKLYVNKVFITEDNVQIIPQYLRFLKGIIDSSDLPLNISRETLQNNKVIEKIKQSIVKRVLSELKKKAENDINDYKKFWENFGSVLKEGLCESMNTEFREELLSACRFYSTNSDDSLISLEDYIERMKEGQDNIYYLTGNDLDSIKKSPQLEGFVSRGIEVILLIDPVDDFWTNVVTDYQRVPLKSVIRADEDLEKLAHLKKDEEVGESKDENPDSKEKVDAFVKYAIQVLDKLVSGVRVSKKLTNSPVCLAVADGSMDIRMERFLREQKQLNYKSTKILEINPKHPIVSRMIDEYANTGENAVLDNMLHLLLGQACILEGEELEDVSSFAERMNNVLVKVYQ.

Residues 1 to 334 (MQDVVNSEKL…SSDLPLNISR (334 aa)) are a; substrate-binding. Residues 335–558 (ETLQNNKVIE…DGSMDIRMER (224 aa)) are b. Residues 559–637 (FLREQKQLNY…MNNVLVKVYQ (79 aa)) form a c region.

Belongs to the heat shock protein 90 family. Homodimer.

It localises to the cytoplasm. Functionally, molecular chaperone. Has ATPase activity. The sequence is that of Chaperone protein HtpG from Ehrlichia canis (strain Jake).